A 382-amino-acid chain; its full sequence is Lipid-A-disaccharide synthase (382 aa).

The protein belongs to the LpxB family.

It catalyses the reaction 2-N,3-O-bis[(3R)-3-hydroxytetradecanoyl]-alpha-D-glucosaminyl 1-phosphate + UDP-2-N,3-O-bis[(3R)-3-hydroxytetradecanoyl]-alpha-D-glucosamine = lipid A disaccharide (E. coli) + UDP + H(+). The enzyme catalyses a lipid X + a UDP-2-N,3-O-bis[(3R)-3-hydroxyacyl]-alpha-D-glucosamine = a lipid A disaccharide + UDP + H(+). The protein operates within glycolipid biosynthesis; lipid IV(A) biosynthesis; lipid IV(A) from (3R)-3-hydroxytetradecanoyl-[acyl-carrier-protein] and UDP-N-acetyl-alpha-D-glucosamine: step 5/6. Functionally, condensation of UDP-2,3-diacylglucosamine and 2,3-diacylglucosamine-1-phosphate to form lipid A disaccharide, a precursor of lipid A, a phosphorylated glycolipid that anchors the lipopolysaccharide to the outer membrane of the cell. In Salmonella agona (strain SL483), this protein is Lipid-A-disaccharide synthase.